A 412-amino-acid polypeptide reads, in one-letter code: Phosphoglycerate kinase (412 aa).

Substrate-binding positions include 24–26, arginine 44, 67–70, arginine 126, and arginine 170; these read DLN and HLGR. Residues lysine 220, glycine 308, glutamate 339, and 368–371 contribute to the ATP site; that span reads GGDS.

Belongs to the phosphoglycerate kinase family. Monomer.

The protein localises to the cytoplasm. It carries out the reaction (2R)-3-phosphoglycerate + ATP = (2R)-3-phospho-glyceroyl phosphate + ADP. It participates in carbohydrate degradation; glycolysis; pyruvate from D-glyceraldehyde 3-phosphate: step 2/5. This chain is Phosphoglycerate kinase, found in Mycobacteroides abscessus (strain ATCC 19977 / DSM 44196 / CCUG 20993 / CIP 104536 / JCM 13569 / NCTC 13031 / TMC 1543 / L948) (Mycobacterium abscessus).